The sequence spans 296 residues: 4-diphosphocytidyl-2-C-methyl-D-erythritol kinase (296 aa).

The active site involves lysine 13. ATP is bound at residue 98 to 108 (PVAAGIGGGSA). Residue aspartate 140 is part of the active site.

This sequence belongs to the GHMP kinase family. IspE subfamily.

It carries out the reaction 4-CDP-2-C-methyl-D-erythritol + ATP = 4-CDP-2-C-methyl-D-erythritol 2-phosphate + ADP + H(+). It participates in isoprenoid biosynthesis; isopentenyl diphosphate biosynthesis via DXP pathway; isopentenyl diphosphate from 1-deoxy-D-xylulose 5-phosphate: step 3/6. Functionally, catalyzes the phosphorylation of the position 2 hydroxy group of 4-diphosphocytidyl-2C-methyl-D-erythritol. This chain is 4-diphosphocytidyl-2-C-methyl-D-erythritol kinase, found in Rhodopseudomonas palustris (strain HaA2).